The chain runs to 154 residues: Ascorbate-specific PTS system EIIA component (154 aa).

The PTS EIIA type-2 domain occupies 6-150 (SLAENKSIRL…QEVLDLIDRT (145 aa)). H68 acts as the Tele-phosphohistidine intermediate in catalysis. At H68 the chain carries Phosphohistidine.

The protein localises to the cytoplasm. Functionally, the phosphoenolpyruvate-dependent sugar phosphotransferase system (sugar PTS), a major carbohydrate active transport system, catalyzes the phosphorylation of incoming sugar substrates concomitantly with their translocation across the cell membrane. The enzyme II UlaABC PTS system is involved in ascorbate transport. In Shigella flexneri, this protein is Ascorbate-specific PTS system EIIA component (ulaC).